The sequence spans 318 residues: Taste receptor type 2 member 7 (318 aa).

Residues 1–9 (MTDKVQTTL) are Extracellular-facing. Residues 10-30 (LFLAIGEFSVGILGNAFIGLV) traverse the membrane as a helical segment. At 31 to 55 (NCMDWVKKRKIASIDLILTSLAISR) the chain is on the cytoplasmic side. A helical membrane pass occupies residues 56-76 (ICLLCVILLDCFMLVLYPDVY). Topologically, residues 77–94 (ATGKQMRIIDFFWTLTNH) are extracellular. The helical transmembrane segment at 95 to 115 (LSIWFATCLSIYYFFKIANFF) threads the bilayer. At 116–128 (HPLFLWMKWRIDR) the chain is on the cytoplasmic side. A helical transmembrane segment spans residues 129–149 (VISWILLGCMVLSVFINLPAT). At 150–187 (ENLNADFRRCVKAKRKTNLTWSCRVTKAQHASTKLFLN) the chain is on the extracellular side. N-linked (GlcNAc...) asparagine glycosylation is present at Asn167. Residues 188-208 (LVTLLPFSVCLMSFFLLILSL) traverse the membrane as a helical segment. At 209 to 235 (WRHIRRMQLSATGCRDPSTEAHVRALK) the chain is on the cytoplasmic side. A helical membrane pass occupies residues 236–256 (AVISFLLLFIAYYLSFLIATS). Residues 257–266 (SYFIPETELA) are Extracellular-facing. The helical transmembrane segment at 267-287 (VIFGEFIALIYPSSHSFILIL) threads the bilayer. The Cytoplasmic portion of the chain corresponds to 288–318 (GNSKLRRASLKVLWTVMSILKGRKFQQHKQI).

Belongs to the G-protein coupled receptor T2R family.

The protein resides in the membrane. In terms of biological role, gustducin-coupled receptor implicated in the perception of bitter compounds in the oral cavity and the gastrointestinal tract. Signals through PLCB2 and the calcium-regulated cation channel TRPM5. The protein is Taste receptor type 2 member 7 (TAS2R7) of Macaca mulatta (Rhesus macaque).